Here is a 101-residue protein sequence, read N- to C-terminus: Small ribosomal subunit protein uS14 (101 aa).

The disordered stretch occupies residues 1 to 25 (MAKVSAIQKNKSRQKKSQRLHNKRS). Residues 10 to 25 (NKSRQKKSQRLHNKRS) show a composition bias toward basic residues.

This sequence belongs to the universal ribosomal protein uS14 family. Part of the 30S ribosomal subunit. Contacts proteins S3 and S10.

Functionally, binds 16S rRNA, required for the assembly of 30S particles and may also be responsible for determining the conformation of the 16S rRNA at the A site. In Rickettsia typhi (strain ATCC VR-144 / Wilmington), this protein is Small ribosomal subunit protein uS14.